Consider the following 220-residue polypeptide: Protein CREG1 (220 aa).

Positions 1 to 31 (MAGLSRGSARALLAALLASTLLALLVSPARG) are cleaved as a signal peptide. Asparagine 160, asparagine 193, and asparagine 216 each carry an N-linked (GlcNAc...) asparagine glycan.

It belongs to the CREG family. Homodimer. Interacts with IGF2R; the interaction is dependent on glycosylation. In terms of processing, N-glycosylated.

It localises to the secreted. May contribute to the transcriptional control of cell growth and differentiation. Antagonizes transcriptional activation and cellular transformation by the adenovirus E1A protein. The transcriptional control activity of cell growth requires interaction with IGF2R. The chain is Protein CREG1 (CREG1) from Homo sapiens (Human).